The following is a 207-amino-acid chain: 3-demethoxyubiquinol 3-hydroxylase (207 aa).

Fe cation contacts are provided by Glu-56, Glu-86, His-89, Glu-138, Glu-170, and His-173.

This sequence belongs to the COQ7 family. Fe cation serves as cofactor.

It is found in the cell membrane. It carries out the reaction a 5-methoxy-2-methyl-3-(all-trans-polyprenyl)benzene-1,4-diol + AH2 + O2 = a 3-demethylubiquinol + A + H2O. Its pathway is cofactor biosynthesis; ubiquinone biosynthesis. In terms of biological role, catalyzes the hydroxylation of 2-nonaprenyl-3-methyl-6-methoxy-1,4-benzoquinol during ubiquinone biosynthesis. The chain is 3-demethoxyubiquinol 3-hydroxylase from Dechloromonas aromatica (strain RCB).